A 168-amino-acid polypeptide reads, in one-letter code: Prespore-specific protein A (168 aa).

An N-terminal signal peptide occupies residues 1–19 (MKFQHTFIALLSLLTYANA). O-linked (GlcNAc) threonine glycans are attached at residues Thr110, Thr114, Thr116, Thr118, Thr120, Thr122, Thr124, Thr126, Thr128, Thr130, Thr132, Thr134, and Thr138. 3 consecutive repeat copies span residues 116–119 (TPTV), 120–123 (TPTV), and 124–127 (TPTV). The tract at residues 116–127 (TPTVTPTVTPTV) is 3 X 4 AA tandem repeats of T-P-T-V. The span at 116–131 (TPTVTPTVTPTVTPTP) shows a compositional bias: low complexity. Residues 116 to 147 (TPTVTPTVTPTVTPTPTNTPNPTPSQTSTTTG) are disordered. Ser140 is a glycosylation site (O-linked (GlcNAc) serine). The GPI-like-anchor amidated glycine moiety is linked to residue Gly147. A propeptide spans 148-168 (SASTVVASLSLIIFSMILSLC) (removed in mature form).

Belongs to the ponticulin family. In terms of processing, O-glycosylated in the repeat region. The oligosaccharides contain N-acetylglucosamine and fucose as the major constituents. Post-translationally, the GPI-like-anchor contains a phosphoceramide group, rather than a phosphatidyl group.

It localises to the cell membrane. In terms of biological role, may bind F-actin and nucleates actin assembly. This chain is Prespore-specific protein A (pspA), found in Dictyostelium discoideum (Social amoeba).